The chain runs to 908 residues: UPF0182 protein Csac_0864 (908 aa).

The next 7 membrane-spanning stretches (helical) occupy residues 22 to 42 (FVISILVILAIVFSIAFDLFL), 62 to 82 (FYVKLSVQVVSFMILFFVFFV), 98 to 118 (ISLLKKNILNVIVSVLLALIA), 166 to 186 (FLFYLVIFVCIYTVVLYIVLY), 208 to 228 (HIFFNLILIFVIKIFTLKYEM), 253 to 273 (YFRLSYIVLVAVILLSIYFFI), and 286 to 306 (SYIGWAVLGTIIATAFQYFVV).

It belongs to the UPF0182 family.

Its subcellular location is the cell membrane. In Caldicellulosiruptor saccharolyticus (strain ATCC 43494 / DSM 8903 / Tp8T 6331), this protein is UPF0182 protein Csac_0864.